The chain runs to 1141 residues: Serine-aspartate repeat-containing protein E (1141 aa).

Positions methionine 1–alanine 52 are cleaved as a signal peptide. Positions phenylalanine 23–serine 34 match the YSIRK-G/S signaling motif motif. The tract at residues alanine 53–lysine 601 is ligand binding A region. The interval glutamate 54 to proline 248 is disordered. The segment covering alanine 61–valine 75 has biased composition (basic and acidic residues). Residues glutamate 77–asparagine 90 are compositionally biased toward low complexity. The span at isoleucine 92–serine 108 shows a compositional bias: basic and acidic residues. The segment covering threonine 109–threonine 126 has biased composition (low complexity). Residues asparagine 130 to threonine 145 show a composition bias toward basic and acidic residues. The segment covering asparagine 159 to threonine 207 has biased composition (polar residues). Residues serine 216 to threonine 241 show a composition bias toward basic and acidic residues. 3 consecutive CNA-B domains span residues leucine 602–proline 714, lysine 715–proline 824, and lysine 825–threonine 935. The interval valine 899–alanine 1117 is disordered. Acidic residues-rich tracts occupy residues threonine 903 to glutamate 913 and tyrosine 930 to serine 1080. The short motif at leucine 1104 to glycine 1108 is the LPXTG sorting signal element. Pentaglycyl murein peptidoglycan amidated threonine is present on threonine 1107. A propeptide spans glycine 1108 to lysine 1141 (removed by sortase).

The protein belongs to the serine-aspartate repeat-containing protein (SDr) family. Interacts with host complement factor H/CFAH (via C-terminus). Interacts with host complement regulator C4BPA.

It is found in the secreted. The protein resides in the cell wall. In terms of biological role, cell surface-associated calcium-binding protein which plays an important role in adhesion and pathogenesis. Contributes to the resistance to killing by innate immune components in blood and thus attenuates bacterial clearance by interacting with host complement factor H/CFAH and modulating its activity. Also inhibits bacterial opsonization and killing by interacting with host complement regulator C4BPA and thus inhibiting classical complement pathway activation. In Staphylococcus aureus (strain N315), this protein is Serine-aspartate repeat-containing protein E (sdrE).